A 385-amino-acid chain; its full sequence is MTSSINILLLLHPTVVTDAHSVEQIKSKIYQSHNNDINSININQQIIDRITKGVIELPNDYYDEIIYINPNDEPQYREIPISLMQLIYKLLKSNGKFKGDLPLDQNLDVLMTGFIIEEEEQEQQEQQSGLNEGTVYVWVKPIPVDEPVVTLLKKKTTNNTKKSLPLFKKLNKNDMTINVPQEIDNITNNKRKLVETKLTYFSSDDENSSDGSLSDNANEEEEDDDELIDENDLLKYNNHNNNNNNNGEQSFSDKLITPRKCELSLNGGKKRKKACKDCTCGLKELEELEVSNQQNLQDQILGKLAQSATLEAIKIEERLKQQSQKKIKFTEEDLSEIDFTVQGKTGGCGSCALGDAFRCDGCPYLGLPPFKPGEVVKLDGFGEDI.

Residues 1 to 177 (MTSSINILLL…KKLNKNDMTI (177 aa)) are N-terminal SAM-like domain. Residues 178–240 (NVPQEIDNIT…NDLLKYNNHN (63 aa)) are linker. Positions 200–226 (YFSSDDENSSDGSLSDNANEEEEDDDE) are disordered. Positions 217-226 (ANEEEEDDDE) are enriched in acidic residues. 4 residues coordinate [2Fe-2S] cluster: Cys-261, Cys-275, Cys-278, and Cys-280. Positions 261–280 (CELSLNGGKKRKKACKDCTC) are fe-S binding site A. Residues Cys-348, Cys-351, Cys-359, and Cys-362 each coordinate [4Fe-4S] cluster. 2 consecutive short sequence motifs (cx2C motif) follow at residues 348-351 (CGSC) and 359-362 (CDGC). The tract at residues 348-362 (CGSCALGDAFRCDGC) is fe-S binding site B.

It belongs to the anamorsin family. As to quaternary structure, monomer. Interacts with TAH18. Interacts with MIA40. [2Fe-2S] cluster serves as cofactor. [4Fe-4S] cluster is required as a cofactor.

It is found in the cytoplasm. The protein resides in the mitochondrion intermembrane space. Its function is as follows. Component of the cytosolic iron-sulfur (Fe-S) protein assembly (CIA) machinery required for the maturation of extramitochondrial Fe-S proteins. Part of an electron transfer chain functioning in an early step of cytosolic Fe-S biogenesis, facilitating the de novo assembly of a [4Fe-4S] cluster on the scaffold complex CFD1-NBP35. Electrons are transferred to DRE2 from NADPH via the FAD- and FMN-containing protein TAH18. TAH18-DRE2 are also required for the assembly of the diferric tyrosyl radical cofactor of ribonucleotide reductase (RNR), probably by providing electrons for reduction during radical cofactor maturation in the catalytic small subunit RNR2. The chain is Fe-S cluster assembly protein DRE2 from Candida dubliniensis (strain CD36 / ATCC MYA-646 / CBS 7987 / NCPF 3949 / NRRL Y-17841) (Yeast).